An 80-amino-acid polypeptide reads, in one-letter code: Small ribosomal subunit protein uS17 (80 aa).

Belongs to the universal ribosomal protein uS17 family. Part of the 30S ribosomal subunit.

In terms of biological role, one of the primary rRNA binding proteins, it binds specifically to the 5'-end of 16S ribosomal RNA. This Chelativorans sp. (strain BNC1) protein is Small ribosomal subunit protein uS17.